The following is a 243-amino-acid chain: 1-(5-phosphoribosyl)-5-[(5-phosphoribosylamino)methylideneamino] imidazole-4-carboxamide isomerase (243 aa).

Asp8 (proton acceptor) is an active-site residue. The Proton donor role is filled by Asp130.

This sequence belongs to the HisA/HisF family.

Its subcellular location is the cytoplasm. The catalysed reaction is 1-(5-phospho-beta-D-ribosyl)-5-[(5-phospho-beta-D-ribosylamino)methylideneamino]imidazole-4-carboxamide = 5-[(5-phospho-1-deoxy-D-ribulos-1-ylimino)methylamino]-1-(5-phospho-beta-D-ribosyl)imidazole-4-carboxamide. The protein operates within amino-acid biosynthesis; L-histidine biosynthesis; L-histidine from 5-phospho-alpha-D-ribose 1-diphosphate: step 4/9. The sequence is that of 1-(5-phosphoribosyl)-5-[(5-phosphoribosylamino)methylideneamino] imidazole-4-carboxamide isomerase from Saccharophagus degradans (strain 2-40 / ATCC 43961 / DSM 17024).